Here is a 725-residue protein sequence, read N- to C-terminus: Another transcription unit protein (725 aa).

Acidic residues predominate over residues 1-10 (MGSQNSDDDS). Disordered regions lie at residues 1–379 (MGSQ…PETR), 566–603 (RQAMRNQHKSLPKKKKPGAGEPLIGGGTSSYQHDEGSD), and 617–725 (YKKG…SDND). A compositionally biased stretch (low complexity) spans 11 to 70 (GSSGSSRSGSRSVTPQGGSAPGSQRSRRSGSGSDRSRSGSRSSRSRSGSGSPRSARSGSA). Positions 82–101 (RSKRSRSAHSRRSGSARSRK) are enriched in basic residues. Positions 104–116 (TPESPQSHRSGSL) are enriched in polar residues. Positions 117 to 140 (QSRKSGSPQSRRSGSPQSRKSGST) are enriched in low complexity. The span at 141 to 160 (HSRRSGSAHSRRSGSARSRK) shows a compositional bias: basic residues. Phosphoserine is present on residues serine 175, serine 186, serine 188, and serine 190. The span at 206–223 (SRSRSRSRSGSRTSRSRS) shows a compositional bias: basic residues. A compositionally biased stretch (low complexity) spans 224-242 (KTGTPSPNRSRSGSASGSG). Phosphoserine occurs at positions 265, 267, and 269. Threonine 286 is subject to Phosphothreonine. A phosphoserine mark is found at serine 288, serine 290, and serine 312. Over residues 306-318 (GDADDISDDEDEA) the composition is skewed to acidic residues. Over residues 325-353 (SPVRSKSRSQSKSHSHSRSMSHSRSRSRS) the composition is skewed to basic residues. Basic and acidic residues predominate over residues 354-369 (RSRDKVESQVESAPKE). Serine 355 bears the Phosphoserine mark. Residues 571 to 582 (NQHKSLPKKKKP) are compositionally biased toward basic residues. Threonine 593 carries the phosphothreonine modification. Phosphoserine is present on residues serine 595, serine 602, and serine 631. Threonine 632 carries the phosphothreonine modification. Phosphoserine occurs at positions 635, 636, and 642. Basic and acidic residues predominate over residues 644–665 (FEARRSKKVDKAKASKALRDSD). Residues 710–725 (SGSGSGSGSGSGSDND) are compositionally biased toward gly residues.

This is Another transcription unit protein (Atu) from Drosophila melanogaster (Fruit fly).